The primary structure comprises 1798 residues: Laminin subunit beta-2 (1798 aa).

The signal sequence occupies residues 1 to 32 (MELTSRERGRGQPLPWELRLGLLLSVLAATLA). The region spanning 43-282 (SRGSCYPATG…ALYELVVRGN (240 aa)) is the Laminin N-terminal domain. Asparagine 248 carries an N-linked (GlcNAc...) asparagine glycan. 19 disulfides stabilise this stretch: cysteine 283–cysteine 292, cysteine 285–cysteine 310, cysteine 312–cysteine 321, cysteine 324–cysteine 344, cysteine 347–cysteine 356, cysteine 349–cysteine 374, cysteine 377–cysteine 386, cysteine 389–cysteine 407, cysteine 410–cysteine 423, cysteine 412–cysteine 438, cysteine 440–cysteine 449, cysteine 452–cysteine 467, cysteine 470–cysteine 484, cysteine 472–cysteine 491, cysteine 493–cysteine 502, cysteine 505–cysteine 519, cysteine 522–cysteine 534, cysteine 524–cysteine 541, and cysteine 543–cysteine 552. Laminin EGF-like domains are found at residues 283-346 (CFCY…ACRK), 347-409 (CECH…VCRS), 410-469 (CDCD…GCRR), and 470-521 (CQCN…GCRP). An N-linked (GlcNAc...) asparagine glycan is attached at asparagine 368. Positions 522 to 552 (CDCDVGGALDPQCDEGTGQCHCRQHMVGRRC) constitute a Laminin EGF-like 5; truncated domain. Residues 561–777 (RPFLDHLIWE…LLISLSTLIY (217 aa)) form the Laminin IV type B domain. Intrachain disulfides connect cysteine 783–cysteine 795, cysteine 785–cysteine 802, cysteine 804–cysteine 813, cysteine 816–cysteine 828, cysteine 831–cysteine 843, cysteine 833–cysteine 850, cysteine 852–cysteine 861, cysteine 864–cysteine 874, cysteine 877–cysteine 886, cysteine 879–cysteine 893, cysteine 896–cysteine 905, cysteine 908–cysteine 924, cysteine 927–cysteine 943, cysteine 929–cysteine 954, cysteine 956–cysteine 965, cysteine 968–cysteine 983, cysteine 986–cysteine 1000, cysteine 988–cysteine 1007, cysteine 1010–cysteine 1019, cysteine 1022–cysteine 1035, cysteine 1038–cysteine 1058, cysteine 1040–cysteine 1065, cysteine 1067–cysteine 1076, cysteine 1079–cysteine 1092, cysteine 1095–cysteine 1107, cysteine 1097–cysteine 1114, cysteine 1116–cysteine 1125, cysteine 1128–cysteine 1140, cysteine 1143–cysteine 1155, cysteine 1145–cysteine 1162, cysteine 1164–cysteine 1173, and cysteine 1176–cysteine 1187. Laminin EGF-like domains are found at residues 783 to 830 (CQCN…GCQA), 831 to 876 (CQCS…SCRP), 877 to 926 (CVCN…QCRP), 927 to 985 (CPCP…RCQL), 986 to 1037 (CECS…SCHR), 1038 to 1094 (CTCN…GCQP), 1095 to 1142 (CACH…QCHA), and 1143 to 1189 (CDCD…ACHP). Residue asparagine 1085 is glycosylated (N-linked (GlcNAc...) asparagine). Residues 1190–1409 (CHACFGDWDR…LSLTDINELV (220 aa)) are domain II. Asparagine 1249, asparagine 1308, and asparagine 1348 each carry an N-linked (GlcNAc...) asparagine glycan. Residues 1253-1319 (ASTAQLVEAT…TLRQLDQHLD (67 aa)) are a coiled coil. The interval 1338–1364 (SQSAEAERRANTSALAVPSPVSNSASA) is disordered. Residues 1350-1363 (SALAVPSPVSNSAS) are compositionally biased toward low complexity. The tract at residues 1410–1442 (CGAPGDAPCATSPCGGAGCRDEDGQPRCGGLSC) is domain alpha. The segment at 1443–1798 (NGAAATADLA…LQVQIYNTCQ (356 aa)) is domain I. A coiled-coil region spans residues 1472-1526 (SILSRVAETRRQASEAQQRAQAALDKANASRGQVEQANQELQELIQSVKDFLNQE). Asparagine 1499 is a glycosylation site (N-linked (GlcNAc...) asparagine). Serine 1532 carries the phosphoserine; by FAM20C modification. Residues 1577–1790 (VGDVRRAEQL…RSVLQAINLQ (214 aa)) adopt a coiled-coil conformation.

In terms of assembly, laminin is a complex glycoprotein, consisting of three different polypeptide chains (alpha, beta, gamma), which are bound to each other by disulfide bonds into a cross-shaped molecule comprising one long and three short arms with globules at each end. Beta-2 is a subunit of laminin-3 (laminin-121 or S-laminin), laminin-4 (laminin-221 or S-merosin), laminin-7 (laminin-321 or KS-laminin), laminin-9 (laminin-421), laminin-11 (laminin-521), laminin-14 (laminin-423) and laminin-15 (laminin-523).

Its subcellular location is the secreted. The protein localises to the extracellular space. It localises to the extracellular matrix. It is found in the basement membrane. Binding to cells via a high affinity receptor, laminin is thought to mediate the attachment, migration and organization of cells into tissues during embryonic development by interacting with other extracellular matrix components. The sequence is that of Laminin subunit beta-2 (LAMB2) from Homo sapiens (Human).